Consider the following 858-residue polypeptide: Leucine--tRNA ligase (858 aa).

Positions 43–54 (PYPSGDGLHVGH) match the 'HIGH' region motif. The 'KMSKS' region signature appears at 629–633 (KMSKS). K632 serves as a coordination point for ATP.

The protein belongs to the class-I aminoacyl-tRNA synthetase family.

The protein localises to the cytoplasm. It catalyses the reaction tRNA(Leu) + L-leucine + ATP = L-leucyl-tRNA(Leu) + AMP + diphosphate. The protein is Leucine--tRNA ligase of Treponema denticola (strain ATCC 35405 / DSM 14222 / CIP 103919 / JCM 8153 / KCTC 15104).